Reading from the N-terminus, the 212-residue chain is 3-isopropylmalate dehydratase small subunit (212 aa).

It belongs to the LeuD family. LeuD type 1 subfamily. As to quaternary structure, heterodimer of LeuC and LeuD.

The catalysed reaction is (2R,3S)-3-isopropylmalate = (2S)-2-isopropylmalate. The protein operates within amino-acid biosynthesis; L-leucine biosynthesis; L-leucine from 3-methyl-2-oxobutanoate: step 2/4. Its function is as follows. Catalyzes the isomerization between 2-isopropylmalate and 3-isopropylmalate, via the formation of 2-isopropylmaleate. This chain is 3-isopropylmalate dehydratase small subunit, found in Methylococcus capsulatus (strain ATCC 33009 / NCIMB 11132 / Bath).